The sequence spans 301 residues: Protoheme IX farnesyltransferase (301 aa).

Transmembrane regions (helical) follow at residues 29-49 (VVAL…PGAV), 51-71 (LQPL…AAAF), 101-121 (AFSF…WWVN), 123-143 (LTAW…TAYL), 150-170 (NIVI…TAVT), 177-197 (ALLL…ALAI), 223-243 (CILL…LVGM), 244-264 (SGPV…YKAW), and 281-301 (FSIY…YLWG).

This sequence belongs to the UbiA prenyltransferase family. Protoheme IX farnesyltransferase subfamily.

The protein resides in the cell inner membrane. The catalysed reaction is heme b + (2E,6E)-farnesyl diphosphate + H2O = Fe(II)-heme o + diphosphate. It participates in porphyrin-containing compound metabolism; heme O biosynthesis; heme O from protoheme: step 1/1. Functionally, converts heme B (protoheme IX) to heme O by substitution of the vinyl group on carbon 2 of heme B porphyrin ring with a hydroxyethyl farnesyl side group. The polypeptide is Protoheme IX farnesyltransferase (Shewanella denitrificans (strain OS217 / ATCC BAA-1090 / DSM 15013)).